The chain runs to 70 residues: Large ribosomal subunit protein bL31 (70 aa).

C16, C18, C37, and C40 together coordinate Zn(2+).

The protein belongs to the bacterial ribosomal protein bL31 family. Type A subfamily. Part of the 50S ribosomal subunit. It depends on Zn(2+) as a cofactor.

Its function is as follows. Binds the 23S rRNA. The polypeptide is Large ribosomal subunit protein bL31 (Shewanella denitrificans (strain OS217 / ATCC BAA-1090 / DSM 15013)).